We begin with the raw amino-acid sequence, 418 residues long: MSKILKIKARQVFDSRGNPTIEAEVYSKKLSASAICPSGASTGTYEAFEKRDDNNKKYLGKSVLGTVNLVNTKISKKLIGTNIHDQTRIDTILINLDGTRQKTNLGANAILAVSMAAKKLSAKIKNVPLYKTFLVKNNYKLPYPLMNIINGGAHANNGLRIQEFMIRPDKAKNFSEAMRICFVVINNLKKLIIKKGLSTSVGDEGGFAPMISNNEKALDLVVAAINKSGFKNGKDVSICLDVAANELMKKDKYSIHSKKFVSVDQSIKEYKKIINKYKIKSIEDPFGENDWMAWSKLMKNTNNVQIVGDDLYVTNLERLKKGFLNNSSNSILIKLNQIGTVSETLEVIKFAQIIGYKTIISHRSGDSEDTFIADLAVGTNSNQIKTGSLARSERVAKYNQLLRIEEELGKKASMSKIH.

A (2R)-2-phosphoglycerate-binding site is contributed by Q162. E204 (proton donor) is an active-site residue. Mg(2+) contacts are provided by D241, E283, and D309. Positions 334, 363, 364, and 385 each coordinate (2R)-2-phosphoglycerate. Catalysis depends on K334, which acts as the Proton acceptor.

This sequence belongs to the enolase family. Requires Mg(2+) as cofactor.

The protein localises to the cytoplasm. It is found in the secreted. Its subcellular location is the cell surface. It catalyses the reaction (2R)-2-phosphoglycerate = phosphoenolpyruvate + H2O. It participates in carbohydrate degradation; glycolysis; pyruvate from D-glyceraldehyde 3-phosphate: step 4/5. Catalyzes the reversible conversion of 2-phosphoglycerate (2-PG) into phosphoenolpyruvate (PEP). It is essential for the degradation of carbohydrates via glycolysis. In Pelagibacter ubique (strain HTCC1062), this protein is Enolase.